The chain runs to 25 residues: Repetitive proline-rich cell wall protein (25 aa).

The segment at 1-25 (NYDKPPVEKPPVYKPPVEKPPVYKP) is disordered. 4 repeat units span residues 5-9 (PPVEK), 10-14 (PPVYK), 15-19 (PPVEK), and 20-24 (PPVYK). Residues 5-24 (PPVEKPPVYKPPVEKPPVYK) are 4 X 5 AA tandem repeats of P-P-V-[EY]-K. 4 positions are modified to 4-hydroxyproline: Pro-6, Pro-11, Pro-16, and Pro-21. Positions 8 to 25 (EKPPVYKPPVEKPPVYKP) are enriched in pro residues.

This sequence belongs to the plant proline-rich protein superfamily. ENOD12 family.

It is found in the secreted. It localises to the cell wall. This chain is Repetitive proline-rich cell wall protein, found in Phaseolus vulgaris (Kidney bean).